Consider the following 494-residue polypeptide: O-acetyltransferase ptmV (494 aa).

The disordered stretch occupies residues Glu181–His203.

It belongs to the fumigaclavine B O-acetyltransferase family. In terms of assembly, monomer.

It functions in the pathway secondary metabolite biosynthesis. In terms of biological role, O-acetyltransferase; part of the gene cluster that mediates the biosynthesis of the indole diterpenes penitrems. The geranylgeranyl diphosphate (GGPP) synthase ptmG catalyzes the first step in penitrem biosynthesis via conversion of farnesyl pyrophosphate and isopentyl pyrophosphate into geranylgeranyl pyrophosphate (GGPP). Condensation of indole-3-glycerol phosphate with GGPP by the prenyl transferase ptmC then forms 3-geranylgeranylindole (3-GGI). Epoxidation by the FAD-dependent monooxygenase ptmM leads to a epoxidized-GGI that is substrate of the terpene cyclase ptmB for cyclization to yield paspaline. Paspaline is subsequently converted to 13-desoxypaxilline by the cytochrome P450 monooxygenase ptmP, the latter being then converted to paxilline by the cytochrome P450 monooxygenase ptmQ. Paxilline is converted to beta-paxitriol via C-10 ketoreduction by the short-chain dehydrogenase ptmH which can be monoprenylated at the C-20 by the indole diterpene prenyltransferase ptmD. A two-step elimination (acetylation and elimination) process performed by the O-acetyltransferase ptmV and ptmI leads to the production of the prenylated form of penijanthine. The FAD-linked oxidoreductase ptmO then converts the prenylated form of penijanthine into PC-M5 which is in turn transformed into PC-M4 by the aromatic dimethylallyltransferase ptmE. Five sequential oxidative transformations performed by the cytochrome P450 monooxygenases ptmK, ptmU, ptmL, ptmN and ptmJ yield the various penitrem compounds. PtmK, ptmU and ptmM are involved in the formation of the key bicyclic ring of penitrem C via the formation of the intermediates secopenitrem D and penitrem D. PtmL catalyzes the epoxidation of penitrem D and C to yield penitrem B and F, respectively. PtmJ catalyzes the last benzylic hydroxylation to convert penitrem B to prenitrem E and penitrem F to penitrem A. The sequence is that of O-acetyltransferase ptmV from Penicillium ochrochloron.